Here is a 171-residue protein sequence, read N- to C-terminus: Transcriptional repressor NrdR (171 aa).

The segment at 3–34 is a zinc-finger region; it reads CPFCGDPNTQVADTRENEGGEVVRRRRRCPKC. The region spanning 49–139 is the ATP-cone domain; that stretch reads PHIVKRNGNR…VYRNFADVDE (91 aa). A disordered region spans residues 148-171; the sequence is KARPKRNRPAEPPEPTSENDLFRS.

The protein belongs to the NrdR family. Zn(2+) is required as a cofactor.

Its function is as follows. Negatively regulates transcription of bacterial ribonucleotide reductase nrd genes and operons by binding to NrdR-boxes. This Aromatoleum aromaticum (strain DSM 19018 / LMG 30748 / EbN1) (Azoarcus sp. (strain EbN1)) protein is Transcriptional repressor NrdR.